Here is a 254-residue protein sequence, read N- to C-terminus: Ribosomal RNA small subunit methyltransferase J (254 aa).

S-adenosyl-L-methionine-binding positions include 107 to 108 (RD), 123 to 124 (ER), and aspartate 177.

Belongs to the methyltransferase superfamily. RsmJ family.

It localises to the cytoplasm. The enzyme catalyses guanosine(1516) in 16S rRNA + S-adenosyl-L-methionine = N(2)-methylguanosine(1516) in 16S rRNA + S-adenosyl-L-homocysteine + H(+). Functionally, specifically methylates the guanosine in position 1516 of 16S rRNA. The polypeptide is Ribosomal RNA small subunit methyltransferase J (Histophilus somni (strain 2336) (Haemophilus somnus)).